Consider the following 299-residue polypeptide: Acetylglutamate kinase (299 aa).

Residues 64-65 (GG), R86, and N197 each bind substrate.

Belongs to the acetylglutamate kinase family. ArgB subfamily.

It is found in the cytoplasm. It carries out the reaction N-acetyl-L-glutamate + ATP = N-acetyl-L-glutamyl 5-phosphate + ADP. It participates in amino-acid biosynthesis; L-arginine biosynthesis; N(2)-acetyl-L-ornithine from L-glutamate: step 2/4. In terms of biological role, catalyzes the ATP-dependent phosphorylation of N-acetyl-L-glutamate. The protein is Acetylglutamate kinase of Persephonella marina (strain DSM 14350 / EX-H1).